We begin with the raw amino-acid sequence, 279 residues long: MRGRRLSGPMFDAIAPIRMQRSRGAASVRLGPRGIEDLAQSGSAKAMLPRMTAGRPEIVFLNTAGGLASGDRLDYRIELAPRTQALATTQTAERAYRAKDAPAQIRLHLQVGEGGWLDWLPQETILYDGARLGRETAVDLAPGAGCLLLEPIILGRLAMGETIRHLQLTDRRIVRQDGRMIHHDALALDDAALSRLHHPAMLGKARAMASLALIAPHAADLLEPARAVLDEPGVTGAASAPPGRLILRLLADDGWPLRRQVIRLLRVLRPDPLPRIWQV.

Belongs to the UreD family. In terms of assembly, ureD, UreF and UreG form a complex that acts as a GTP-hydrolysis-dependent molecular chaperone, activating the urease apoprotein by helping to assemble the nickel containing metallocenter of UreC. The UreE protein probably delivers the nickel.

The protein resides in the cytoplasm. Functionally, required for maturation of urease via the functional incorporation of the urease nickel metallocenter. In Paracoccus denitrificans (strain Pd 1222), this protein is Urease accessory protein UreD.